The primary structure comprises 376 residues: tRNA(Met) cytidine acetate ligase (376 aa).

Residues 7–20, G102, N160, and R181 contribute to the ATP site; that span reads IAEY…HYYQ.

The protein belongs to the TmcAL family.

The protein resides in the cytoplasm. The enzyme catalyses cytidine(34) in elongator tRNA(Met) + acetate + ATP = N(4)-acetylcytidine(34) in elongator tRNA(Met) + AMP + diphosphate. Its function is as follows. Catalyzes the formation of N(4)-acetylcytidine (ac(4)C) at the wobble position of elongator tRNA(Met), using acetate and ATP as substrates. First activates an acetate ion to form acetyladenylate (Ac-AMP) and then transfers the acetyl group to tRNA to form ac(4)C34. The sequence is that of tRNA(Met) cytidine acetate ligase from Exiguobacterium sp. (strain ATCC BAA-1283 / AT1b).